The sequence spans 119 residues: Large ribosomal subunit protein bL19 (119 aa).

The protein belongs to the bacterial ribosomal protein bL19 family.

This protein is located at the 30S-50S ribosomal subunit interface and may play a role in the structure and function of the aminoacyl-tRNA binding site. The chain is Large ribosomal subunit protein bL19 from Pseudoalteromonas atlantica (strain T6c / ATCC BAA-1087).